Reading from the N-terminus, the 342-residue chain is Foldase protein PrsA (342 aa).

An N-terminal signal peptide occupies residues Met1–Ala20. Cys21 carries N-palmitoyl cysteine lipidation. Cys21 is lipidated: S-diacylglycerol cysteine. The region spanning His142–Val235 is the PpiC domain. Residues Met297 to Lys342 are disordered. A compositionally biased stretch (basic and acidic residues) spans Ser306–Thr330. Residues Asp331 to Lys342 show a composition bias toward low complexity.

The protein belongs to the PrsA family.

Its subcellular location is the cell membrane. The enzyme catalyses [protein]-peptidylproline (omega=180) = [protein]-peptidylproline (omega=0). In terms of biological role, plays a major role in protein secretion by helping the post-translocational extracellular folding of several secreted proteins. This Enterococcus faecalis (strain ATCC 700802 / V583) protein is Foldase protein PrsA.